A 391-amino-acid chain; its full sequence is Toluene efflux pump periplasmic linker protein TtgG (391 aa).

The signal sequence occupies residues 1–32 (MRAERWSQTVRQIRSPRALRVIPLTALMLISG). Cysteine 33 carries the N-palmitoyl cysteine lipid modification. Cysteine 33 is lipidated: S-diacylglycerol cysteine. The stretch at 107–136 (RTYEAQLRRAEANRTSAQNLARRYETLLKT) forms a coiled coil.

It belongs to the membrane fusion protein (MFP) (TC 8.A.1) family.

Its subcellular location is the cell inner membrane. The periplasmic linker component of an organic solvent efflux pump. Involved in export of a number of organic solvents, including toluene and styrene. This is the most important solvent efflux pump in this strain, although it can export AMP and some antibiotics. This is Toluene efflux pump periplasmic linker protein TtgG (ttgG) from Pseudomonas putida (strain DOT-T1E).